Consider the following 132-residue polypeptide: Ribonuclease P protein component 2 (132 aa).

Belongs to the eukaryotic/archaeal RNase P protein component 2 family. As to quaternary structure, consists of a catalytic RNA component and at least 4-5 protein subunits.

It localises to the cytoplasm. The enzyme catalyses Endonucleolytic cleavage of RNA, removing 5'-extranucleotides from tRNA precursor.. Functionally, part of ribonuclease P, a protein complex that generates mature tRNA molecules by cleaving their 5'-ends. The chain is Ribonuclease P protein component 2 from Methanosarcina acetivorans (strain ATCC 35395 / DSM 2834 / JCM 12185 / C2A).